A 441-amino-acid chain; its full sequence is Ribosomal protein uS12 methylthiotransferase RimO (441 aa).

Residues 7 to 117 (ASIAMISLGC…VVLEVHRAAP (111 aa)) form the MTTase N-terminal domain. [4Fe-4S] cluster-binding residues include cysteine 16, cysteine 52, cysteine 81, cysteine 150, cysteine 154, and cysteine 157. A Radical SAM core domain is found at 136–373 (LTPRHYAYLK…MAHQQAISAA (238 aa)). A TRAM domain is found at 376-441 (QTRVGREIDV…DEYDLHGDAV (66 aa)).

Belongs to the methylthiotransferase family. RimO subfamily. Requires [4Fe-4S] cluster as cofactor.

It localises to the cytoplasm. It carries out the reaction L-aspartate(89)-[ribosomal protein uS12]-hydrogen + (sulfur carrier)-SH + AH2 + 2 S-adenosyl-L-methionine = 3-methylsulfanyl-L-aspartate(89)-[ribosomal protein uS12]-hydrogen + (sulfur carrier)-H + 5'-deoxyadenosine + L-methionine + A + S-adenosyl-L-homocysteine + 2 H(+). In terms of biological role, catalyzes the methylthiolation of an aspartic acid residue of ribosomal protein uS12. The polypeptide is Ribosomal protein uS12 methylthiotransferase RimO (Bordetella petrii (strain ATCC BAA-461 / DSM 12804 / CCUG 43448)).